The sequence spans 119 residues: Developmental pluripotency-associated protein 5B/5C (119 aa).

The 63-residue stretch at 24–86 (PEVFQVQSLV…SIKVRAKWLL (63 aa)) folds into the KH; atypical domain.

Belongs to the KHDC1 family.

The protein resides in the cytoplasm. In terms of biological role, involved in the maintenance of embryonic stem (ES) cell pluripotency. Dispensable for self-renewal of pluripotent ES cells and establishment of germ cells. Associates with specific target mRNAs. This is Developmental pluripotency-associated protein 5B/5C from Mus musculus (Mouse).